The sequence spans 323 residues: Aspartate carbamoyltransferase catalytic subunit (323 aa).

The carbamoyl phosphate site is built by Arg-68 and Thr-69. Lys-96 contributes to the L-aspartate binding site. Residues Arg-118, His-148, and Gln-151 each coordinate carbamoyl phosphate. Positions 181 and 236 each coordinate L-aspartate. Residues Gly-277 and Pro-278 each contribute to the carbamoyl phosphate site.

Belongs to the aspartate/ornithine carbamoyltransferase superfamily. ATCase family. Heterododecamer (2C3:3R2) of six catalytic PyrB chains organized as two trimers (C3), and six regulatory PyrI chains organized as three dimers (R2).

The catalysed reaction is carbamoyl phosphate + L-aspartate = N-carbamoyl-L-aspartate + phosphate + H(+). It functions in the pathway pyrimidine metabolism; UMP biosynthesis via de novo pathway; (S)-dihydroorotate from bicarbonate: step 2/3. Functionally, catalyzes the condensation of carbamoyl phosphate and aspartate to form carbamoyl aspartate and inorganic phosphate, the committed step in the de novo pyrimidine nucleotide biosynthesis pathway. This chain is Aspartate carbamoyltransferase catalytic subunit, found in Verminephrobacter eiseniae (strain EF01-2).